A 310-amino-acid chain; its full sequence is Probable manganese-dependent inorganic pyrophosphatase (310 aa).

Residues H10, D14, D16, D75, H97, and D149 each coordinate Mn(2+).

It belongs to the PPase class C family. Mn(2+) is required as a cofactor.

It localises to the cytoplasm. It catalyses the reaction diphosphate + H2O = 2 phosphate + H(+). This Clostridium acetobutylicum (strain ATCC 824 / DSM 792 / JCM 1419 / IAM 19013 / LMG 5710 / NBRC 13948 / NRRL B-527 / VKM B-1787 / 2291 / W) protein is Probable manganese-dependent inorganic pyrophosphatase.